Reading from the N-terminus, the 92-residue chain is Protein S100-A12 (92 aa).

2 EF-hand domains span residues 13–48 and 49–84; these read NIFH…LKNT and KDQG…VLIT. His-16 lines the Cu cation pocket. Zn(2+) is bound at residue His-16. Ca(2+) contacts are provided by Ser-19 and His-24. Cu cation is bound at residue Asp-26. Zn(2+) is bound at residue Asp-26. Thr-27 and Glu-32 together coordinate Ca(2+). The hinge domain stretch occupies residues 38–53; it reads TKELPNTLKNTKDQGT. 5 residues coordinate Ca(2+): Asp-62, Asn-64, Asp-66, Gln-68, and Glu-73. The Cu cation site is built by His-86 and His-90. Zn(2+) contacts are provided by His-86 and His-90.

It belongs to the S-100 family. Homodimer. Homooligomer (tetramer or hexamer) in the presence of calcium, zinc and copper ions. Interacts with AGER and both calcium and zinc are essential for the interaction. Interacts with CACYBP in a calcium-dependent manner. Found essentially in granulocytes with small amounts found in lymphocytes.

The protein localises to the secreted. It is found in the cytoplasm. Its subcellular location is the cytoskeleton. It localises to the cell membrane. Functionally, S100A12 is a calcium-, zinc- and copper-binding protein which plays a prominent role in the regulation of inflammatory processes and immune response. Its pro-inflammatory activity involves recruitment of leukocytes, promotion of cytokine and chemokine production, and regulation of leukocyte adhesion and migration. Acts as an alarmin or a danger associated molecular pattern (DAMP) molecule and stimulates innate immune cells via binding to receptor for advanced glycation endproducts (AGER). Binding to AGER activates the MAP-kinase and NF-kappa-B signaling pathways leading to production of pro-inflammatory cytokines and up-regulation of cell adhesion molecules ICAM1 and VCAM1. Acts as a monocyte and mast cell chemoattractant. Can stimulate mast cell degranulation and activation which generates chemokines, histamine and cytokines inducing further leukocyte recruitment to the sites of inflammation. Can inhibit the activity of matrix metalloproteinases; MMP2, MMP3 and MMP9 by chelating Zn(2+) from their active sites. This Sus scrofa (Pig) protein is Protein S100-A12 (S100A12).